We begin with the raw amino-acid sequence, 200 residues long: MARYTGPSWKVSRRLGISLSGTGKELERRPYAPGQHGPTQRKKISEYGLQQAEKQKLRHMYGLTERQFKNTFNKAGKLQGKHGENFMILLEQRLDNIVYRLGLARTRRAARQLVNHGHITVDGKRVDIPSYQVSVGQVISVREKSAKNSAIAESLEVSSFVPEYVTFDAETLTGSLNRLPERSERAAEINEAFIVEFYSR.

The disordered stretch occupies residues 22-43 (TGKELERRPYAPGQHGPTQRKK). In terms of domain architecture, S4 RNA-binding spans 92–170 (QRLDNIVYRL…VPEYVTFDAE (79 aa)).

Belongs to the universal ribosomal protein uS4 family. As to quaternary structure, part of the 30S ribosomal subunit. Contacts protein S5. The interaction surface between S4 and S5 is involved in control of translational fidelity.

One of the primary rRNA binding proteins, it binds directly to 16S rRNA where it nucleates assembly of the body of the 30S subunit. In terms of biological role, with S5 and S12 plays an important role in translational accuracy. This chain is Small ribosomal subunit protein uS4, found in Listeria monocytogenes serotype 4b (strain F2365).